A 204-amino-acid polypeptide reads, in one-letter code: Translation initiation factor 2 subunit beta (204 aa).

In terms of domain architecture, TRAM spans 146–204 (NLEEGQVLDVEIQSLSKRGDGVVKMGRYIMYVSNAKPGQSVKIKISRISGSIVFTERAE).

It belongs to the eIF-2-beta/eIF-5 family. As to quaternary structure, heterotrimer composed of an alpha, a beta and a gamma chain.

EIF-2 functions in the early steps of protein synthesis by forming a ternary complex with GTP and initiator tRNA. This Methanoregula boonei (strain DSM 21154 / JCM 14090 / 6A8) protein is Translation initiation factor 2 subunit beta.